The primary structure comprises 242 residues: Glucosamine-6-phosphate deaminase (242 aa).

The Proton acceptor; for enolization step role is filled by D67. The active-site For ring-opening step is the N136. Catalysis depends on H138, which acts as the Proton acceptor; for ring-opening step. Catalysis depends on E143, which acts as the For ring-opening step.

The protein belongs to the glucosamine/galactosamine-6-phosphate isomerase family. NagB subfamily.

It carries out the reaction alpha-D-glucosamine 6-phosphate + H2O = beta-D-fructose 6-phosphate + NH4(+). It participates in amino-sugar metabolism; N-acetylneuraminate degradation; D-fructose 6-phosphate from N-acetylneuraminate: step 5/5. Functionally, catalyzes the reversible isomerization-deamination of glucosamine 6-phosphate (GlcN6P) to form fructose 6-phosphate (Fru6P) and ammonium ion. In Alkaliphilus metalliredigens (strain QYMF), this protein is Glucosamine-6-phosphate deaminase.